The chain runs to 61 residues: Small ribosomal subunit protein uS14 (61 aa).

Zn(2+)-binding residues include cysteine 24, cysteine 27, cysteine 40, and cysteine 43.

It belongs to the universal ribosomal protein uS14 family. Zinc-binding uS14 subfamily. Part of the 30S ribosomal subunit. Contacts proteins S3 and S10. The cofactor is Zn(2+).

In terms of biological role, binds 16S rRNA, required for the assembly of 30S particles and may also be responsible for determining the conformation of the 16S rRNA at the A site. The polypeptide is Small ribosomal subunit protein uS14 (Leptospira biflexa serovar Patoc (strain Patoc 1 / Ames)).